The primary structure comprises 458 residues: Ammonium transporter Rh type B (458 aa).

The Cytoplasmic segment spans residues M1 to L13. Residues Q14–V34 traverse the membrane as a helical segment. The Extracellular portion of the chain corresponds to R35 to Y61. An N-linked (GlcNAc...) asparagine glycan is attached at N49. The helical transmembrane segment at P62–L82 threads the bilayer. The Cytoplasmic segment spans residues Q83–G86. The chain crosses the membrane as a helical span at residues F87 to V107. At Q108–E124 the chain is on the extracellular side. A helical transmembrane segment spans residues S125 to G145. The Cytoplasmic portion of the chain corresponds to K146–P149. Residues A150 to L170 traverse the membrane as a helical segment. The Extracellular portion of the chain corresponds to L171–D178. A helical membrane pass occupies residues A179 to Y201. Residues R202 to D219 lie on the Cytoplasmic side of the membrane. A helical membrane pass occupies residues L220–L240. Over T241–A251 the chain is Extracellular. The helical transmembrane segment at L252 to V272 threads the bilayer. Topologically, residues G273–H282 are cytoplasmic. A helical transmembrane segment spans residues I283–T303. Position 304 (P304) is a topological domain, extracellular. Residues F305–F325 form a helical membrane-spanning segment. Residues R326–G346 lie on the Cytoplasmic side of the membrane. The chain crosses the membrane as a helical span at residues M347–A367. The Extracellular portion of the chain corresponds to Y368–Q393. A helical membrane pass occupies residues L394–L414. At L415–A458 the chain is on the cytoplasmic side. Residues K416 to P424 form an interaction with ANK3 region. Residues Y429–Q432 carry the Basolateral sorting signal motif. The tract at residues G439 to A458 is disordered.

It belongs to the ammonium transporter (TC 2.A.49) family. Rh subfamily. In terms of assembly, interacts (via C-terminus) with ANK2 and ANK3; required for targeting to the basolateral membrane. N-glycosylated.

It localises to the cell membrane. The protein resides in the basolateral cell membrane. It carries out the reaction NH4(+)(in) = NH4(+)(out). The catalysed reaction is methylamine(out) = methylamine(in). It catalyses the reaction CO2(out) = CO2(in). Ammonium transporter involved in the maintenance of acid-base homeostasis. Transports ammonium and its related derivative methylammonium across the basolateral plasma membrane of epithelial cells likely contributing to renal transepithelial ammonia transport and ammonia metabolism. May transport either NH4(+) or NH3 ammonia species predominantly mediating an electrogenic NH4(+) transport. May act as a CO2 channel providing for renal acid secretion. This Pan troglodytes (Chimpanzee) protein is Ammonium transporter Rh type B (RHBG).